We begin with the raw amino-acid sequence, 110 residues long: UPF0145 protein MTH_507 (110 aa).

This sequence belongs to the UPF0145 family.

In Methanothermobacter thermautotrophicus (strain ATCC 29096 / DSM 1053 / JCM 10044 / NBRC 100330 / Delta H) (Methanobacterium thermoautotrophicum), this protein is UPF0145 protein MTH_507.